Here is a 115-residue protein sequence, read N- to C-terminus: Cell division topological specificity factor (115 aa).

The interval 89 to 115 (TGQIQLKEPKNQSEVDSPETEGKDQNS) is disordered.

It belongs to the MinE family.

In terms of biological role, prevents the cell division inhibition by proteins MinC and MinD at internal division sites while permitting inhibition at polar sites. This ensures cell division at the proper site by restricting the formation of a division septum at the midpoint of the long axis of the cell. In Prochlorococcus marinus (strain NATL2A), this protein is Cell division topological specificity factor.